Reading from the N-terminus, the 124-residue chain is Ribonuclease P protein component (124 aa).

The protein belongs to the RnpA family. As to quaternary structure, consists of a catalytic RNA component (M1 or rnpB) and a protein subunit.

The catalysed reaction is Endonucleolytic cleavage of RNA, removing 5'-extranucleotides from tRNA precursor.. Functionally, RNaseP catalyzes the removal of the 5'-leader sequence from pre-tRNA to produce the mature 5'-terminus. It can also cleave other RNA substrates such as 4.5S RNA. The protein component plays an auxiliary but essential role in vivo by binding to the 5'-leader sequence and broadening the substrate specificity of the ribozyme. This chain is Ribonuclease P protein component, found in Synechocystis sp. (strain ATCC 27184 / PCC 6803 / Kazusa).